A 930-amino-acid polypeptide reads, in one-letter code: Translation initiation factor IF-2 (930 aa).

Over residues 50–67 (FKPAAAPKVEAKPAAPKV) the composition is skewed to low complexity. 2 disordered regions span residues 50-217 (FKPA…SSEE) and 260-346 (EVVP…HELP). Composition is skewed to basic and acidic residues over residues 68–90 (SAEK…EAKP) and 110–125 (FKAE…AERR). Residues 129–141 (KGNNRDQQQNGNR) are compositionally biased toward low complexity. Basic and acidic residues-rich tracts occupy residues 157–167 (RDNRRFNDQAK) and 262–295 (VPEK…DGPR). Residues 309–318 (NQKNSNWNNN) show a composition bias toward low complexity. Positions 337-346 (VTERKFHELP) are enriched in basic and acidic residues. The tr-type G domain occupies 432–599 (ERPPVVTIMG…TVLLVAEIQE (168 aa)). The interval 441 to 448 (GHVDHGKT) is G1. 441 to 448 (GHVDHGKT) lines the GTP pocket. The segment at 466-470 (GITQH) is G2. The interval 487–490 (DTPG) is G3. Residues 487–491 (DTPGH) and 541–544 (NKID) contribute to the GTP site. The segment at 541 to 544 (NKID) is G4. Residues 577–579 (SAK) are G5.

Belongs to the TRAFAC class translation factor GTPase superfamily. Classic translation factor GTPase family. IF-2 subfamily.

The protein resides in the cytoplasm. Its function is as follows. One of the essential components for the initiation of protein synthesis. Protects formylmethionyl-tRNA from spontaneous hydrolysis and promotes its binding to the 30S ribosomal subunits. Also involved in the hydrolysis of GTP during the formation of the 70S ribosomal complex. This is Translation initiation factor IF-2 from Streptococcus pneumoniae (strain ATCC 700669 / Spain 23F-1).